A 325-amino-acid polypeptide reads, in one-letter code: MLYTSIFAAAMAASGAMAAPTTSHGASNCTTLDSFFKSHGKLYWGTAADKNTLMKPGVADFIAKEFGQVTPENSMKFDATEPSRGQFHFDAADYLVDYAEKHDLLIRGHTFLWWSQMPAWVKAIKDKDTLIDVIQTHISTVAGRYKGKIYAWDVVNEIFEQDGSFRKTVYYNLLGEDYVRIAFEAAHKADPKAKLYINDFNLDDPNAAKLKAMIKYVTKWRAAGWPVHGIGSQSHLFAGMGEKSAAAIKMLGAAADEVAITELDITGAPQADYEAVTKGCIDVKNCVGITSWGARDTDSWLASKSPLLFDGNFKPKAAVKAIMAI.

Positions Met1–Ala18 are cleaved as a signal peptide. Residues Ala26–Ile325 enclose the GH10 domain. Asn28 carries an N-linked (GlcNAc...) asparagine glycan. The active-site Proton donor is the Glu157. The Nucleophile role is filled by Glu262. Cys280 and Cys286 form a disulfide bridge.

It belongs to the glycosyl hydrolase 10 (cellulase F) family.

The protein localises to the secreted. The enzyme catalyses Endohydrolysis of (1-&gt;4)-beta-D-xylosidic linkages in xylans.. The protein operates within glycan degradation; xylan degradation. Its function is as follows. Endo-1,4-beta-xylanase involved in the hydrolysis of xylan, a major structural heterogeneous polysaccharide found in plant biomass representing the second most abundant polysaccharide in the biosphere, after cellulose. The polypeptide is Endo-1,4-beta-xylanase 2 (xyl2) (Claviceps purpurea (Ergot fungus)).